Reading from the N-terminus, the 65-residue chain is Beta-defensin 41 (65 aa).

The first 19 residues, 1-19 (MKFHLFFFILLFGATILTA), serve as a signal peptide directing secretion. 3 disulfide bridges follow: C35–C63, C42–C56, and C46–C64.

It belongs to the beta-defensin family. In terms of tissue distribution, isoform 2 is epididymis-specific and expressed mainly in the proximal caput.

Its subcellular location is the secreted. In terms of biological role, has bactericidal activity. Its function is as follows. Isoform 2 may play a role in the antimicrobial protection of sperm and urogenital tract epithelia. In Mus musculus (Mouse), this protein is Beta-defensin 41.